Consider the following 96-residue polypeptide: Keratin-associated protein 12-3 (96 aa).

A run of 14 repeats spans residues 10–14, 15–19, 24–28, 30–34, 35–39, 45–49, 50–54, 55–59, 60–64, 70–74, 75–79, 80–84, 85–89, and 90–94. A 14 X 5 AA approximate repeats region spans residues 10-94; it reads CQPTCCIHSP…CRPISCSTPS (85 aa).

The protein belongs to the KRTAP type 12 family. As to quaternary structure, interacts with hair keratins. Restricted to a narrow region of the hair fiber cuticle, lying approximately 20 cell layers above the apex of the dermal papilla of the hair root; not detected in any other tissues.

Its function is as follows. In the hair cortex, hair keratin intermediate filaments are embedded in an interfilamentous matrix, consisting of hair keratin-associated proteins (KRTAP), which are essential for the formation of a rigid and resistant hair shaft through their extensive disulfide bond cross-linking with abundant cysteine residues of hair keratins. The matrix proteins include the high-sulfur and high-glycine-tyrosine keratins. This is Keratin-associated protein 12-3 (KRTAP12-3) from Homo sapiens (Human).